The following is a 334-amino-acid chain: Guanine nucleotide-binding protein subunit beta-like protein (334 aa).

WD repeat units follow at residues 14–55, 65–104, 106–145, 152–192, 215–256, and 257–294; these read GHKD…DSEF, GHSK…SILL, GHGR…VLKM, MHRG…HLQT, DESK…QSFD, and AIVP…VIAS.

The protein belongs to the WD repeat G protein beta family.

This Encephalitozoon cuniculi (strain GB-M1) (Microsporidian parasite) protein is Guanine nucleotide-binding protein subunit beta-like protein.